A 221-amino-acid polypeptide reads, in one-letter code: UPF0758 protein ECA0145 (221 aa).

The region spanning 99 to 221 is the MPN domain; the sequence is AMLNPEATGQ…FVSFAERGWI (123 aa). Zn(2+)-binding residues include H170, H172, and D183. The JAMM motif motif lies at 170–183; sequence HNHPSGKAEPSQAD.

Belongs to the UPF0758 family. YicR subfamily.

In Pectobacterium atrosepticum (strain SCRI 1043 / ATCC BAA-672) (Erwinia carotovora subsp. atroseptica), this protein is UPF0758 protein ECA0145.